The primary structure comprises 452 residues: GTPase Der (452 aa).

2 consecutive EngA-type G domains span residues 4 to 169 (PIVA…PSPD) and 177 to 352 (INVS…EEHR). Residues 10-17 (GRPNVGKS), 57-61 (DTGGL), 120-123 (NKCE), 183-190 (GRPNVGKS), 230-234 (DTAGI), and 295-298 (NKWD) each bind GTP. Positions 353 to 438 (RRVNTSVVNE…PIRLLWRGKK (86 aa)) constitute a KH-like domain.

The protein belongs to the TRAFAC class TrmE-Era-EngA-EngB-Septin-like GTPase superfamily. EngA (Der) GTPase family. Associates with the 50S ribosomal subunit.

In terms of biological role, GTPase that plays an essential role in the late steps of ribosome biogenesis. The protein is GTPase Der of Crocosphaera subtropica (strain ATCC 51142 / BH68) (Cyanothece sp. (strain ATCC 51142)).